Here is a 47-residue protein sequence, read N- to C-terminus: Packaging protein P22 (47 aa).

A helical transmembrane segment spans residues 22-42; it reads TGWLAFVGLIIVAIILWQQII.

In terms of assembly, heterodimer of P20 and P22; further multimerizes as hexamers of heterodimers. Part of the dodecameric portal complex that is composed of the packaging efficiency factor P6, the DNA packaging ATPase P9, and the internal heterododecamer P20/P22 which spans the virion inner membrane.

The protein localises to the virion membrane. Functionally, together with P22, forms the internal part of the portal complex embeded in the virion internal membrane and which plays critical roles in genome packaging and genome ejection. Both proteins multimerize as a single ring-shaped heterdodecamer arranged around a central channel and interact with the P6/P9 external part of the portal. The chain is Packaging protein P22 (XXII) from Enterobacteria phage PRD1 (Bacteriophage PRD1).